The sequence spans 487 residues: Cysteine--tRNA ligase (487 aa).

Cysteine 29 is a Zn(2+) binding site. The 'HIGH' region motif lies at 31–41 (VTVYDYNHVGH). Residues cysteine 209, histidine 234, and glutamate 238 each contribute to the Zn(2+) site. A 'KMSKS' region motif is present at residues 266-270 (KMSKS). Lysine 269 provides a ligand contact to ATP.

It belongs to the class-I aminoacyl-tRNA synthetase family. In terms of assembly, monomer. Requires Zn(2+) as cofactor.

It is found in the cytoplasm. The enzyme catalyses tRNA(Cys) + L-cysteine + ATP = L-cysteinyl-tRNA(Cys) + AMP + diphosphate. This is Cysteine--tRNA ligase from Sulfurihydrogenibium sp. (strain YO3AOP1).